The primary structure comprises 353 residues: L-tryptophan dehydrogenase (353 aa).

Arg-44 is an NAD(+) binding site. Lys-80 acts as the Proton donor/acceptor in catalysis. NAD(+) contacts are provided by residues Asp-114, Thr-146, 176 to 181, Lys-204, and 255 to 257; these read GLGNVG and AAN.

It belongs to the Glu/Leu/Phe/Val dehydrogenases family. Homodimer.

It carries out the reaction L-tryptophan + NAD(+) + H2O = indole-3-pyruvate + NH4(+) + NADH + H(+). Functionally, catalyzes the reversible oxidative deamination of L-tryptophan to indole-3-pyruvate in the presence of NAD(+). Cannot use other L-amino acids and D-Trp. Involved in the biosynthesis of scytonemin, a cyanobacterial radiation-absorbing pigment. The polypeptide is L-tryptophan dehydrogenase (Nostoc punctiforme (strain ATCC 29133 / PCC 73102)).